Here is a 377-residue protein sequence, read N- to C-terminus: Succinyl-diaminopimelate desuccinylase (377 aa).

Histidine 75 serves as a coordination point for Zn(2+). Aspartate 77 is a catalytic residue. Aspartate 106 is a Zn(2+) binding site. Glutamate 136 serves as the catalytic Proton acceptor. Residues glutamate 137, glutamate 165, and histidine 350 each coordinate Zn(2+).

This sequence belongs to the peptidase M20A family. DapE subfamily. In terms of assembly, homodimer. It depends on Zn(2+) as a cofactor. Co(2+) serves as cofactor.

It catalyses the reaction N-succinyl-(2S,6S)-2,6-diaminopimelate + H2O = (2S,6S)-2,6-diaminopimelate + succinate. Its pathway is amino-acid biosynthesis; L-lysine biosynthesis via DAP pathway; LL-2,6-diaminopimelate from (S)-tetrahydrodipicolinate (succinylase route): step 3/3. Functionally, catalyzes the hydrolysis of N-succinyl-L,L-diaminopimelic acid (SDAP), forming succinate and LL-2,6-diaminopimelate (DAP), an intermediate involved in the bacterial biosynthesis of lysine and meso-diaminopimelic acid, an essential component of bacterial cell walls. The polypeptide is Succinyl-diaminopimelate desuccinylase (Sphingopyxis alaskensis (strain DSM 13593 / LMG 18877 / RB2256) (Sphingomonas alaskensis)).